The chain runs to 372 residues: tRNA-specific 2-thiouridylase MnmA (372 aa).

ATP is bound by residues 16–23 (GMSGGVDS) and Met42. The interval 102 to 104 (NPD) is interaction with target base in tRNA. The active-site Nucleophile is Cys107. A disulfide bond links Cys107 and Cys205. Gly132 lines the ATP pocket. An interaction with tRNA region spans residues 155-157 (KDQ). The active-site Cysteine persulfide intermediate is the Cys205. The interaction with tRNA stretch occupies residues 317 to 318 (RY).

This sequence belongs to the MnmA/TRMU family.

It localises to the cytoplasm. It carries out the reaction S-sulfanyl-L-cysteinyl-[protein] + uridine(34) in tRNA + AH2 + ATP = 2-thiouridine(34) in tRNA + L-cysteinyl-[protein] + A + AMP + diphosphate + H(+). Its function is as follows. Catalyzes the 2-thiolation of uridine at the wobble position (U34) of tRNA, leading to the formation of s(2)U34. In Shewanella sp. (strain ANA-3), this protein is tRNA-specific 2-thiouridylase MnmA.